Here is a 323-residue protein sequence, read N- to C-terminus: Cysteine synthase A (323 aa).

Hydrogen sulfide contacts are provided by asparagine 8 and arginine 35. Lysine 42 is subject to N6-(pyridoxal phosphate)lysine. Pyridoxal 5'-phosphate contacts are provided by residues asparagine 72 and 177-181 (GTGGT). Leucine 269 contacts hydrogen sulfide. Serine 273 is a binding site for pyridoxal 5'-phosphate.

It belongs to the cysteine synthase/cystathionine beta-synthase family. As to quaternary structure, homodimer. It depends on pyridoxal 5'-phosphate as a cofactor.

The catalysed reaction is O-acetyl-L-serine + hydrogen sulfide = L-cysteine + acetate. Its pathway is amino-acid biosynthesis; L-cysteine biosynthesis; L-cysteine from L-serine: step 2/2. Functionally, two cysteine synthase enzymes are found. Both catalyze the same reaction. Cysteine synthase B can also use thiosulfate in place of sulfide to give cysteine thiosulfonate as a product. The protein is Cysteine synthase A (cysK) of Salmonella typhi.